We begin with the raw amino-acid sequence, 464 residues long: Methionine aminopeptidase 2-2 (464 aa).

Residues 1-106 form a disordered region; it reads MGAKTYEGGD…PRVPLSQLFP (106 aa). Positions 37-53 are enriched in acidic residues; sequence EDGDGEFGSDDDDDGGD. Residues 70-86 show a composition bias toward basic residues; it reads PKKKKRSKKKKNNKKKS. His-216 contacts substrate. Positions 237, 248, and 317 each coordinate a divalent metal cation. Position 325 (His-325) interacts with substrate. 2 residues coordinate a divalent metal cation: Glu-350 and Glu-445.

It belongs to the peptidase M24A family. Methionine aminopeptidase eukaryotic type 2 subfamily. Co(2+) is required as a cofactor. It depends on Zn(2+) as a cofactor. The cofactor is Mn(2+). Fe(2+) serves as cofactor.

Its subcellular location is the cytoplasm. It catalyses the reaction Release of N-terminal amino acids, preferentially methionine, from peptides and arylamides.. Its function is as follows. Cotranslationally removes the N-terminal methionine from nascent proteins. The N-terminal methionine is often cleaved when the second residue in the primary sequence is small and uncharged (Met-Ala-, Cys, Gly, Pro, Ser, Thr, or Val). This chain is Methionine aminopeptidase 2-2, found in Talaromyces stipitatus (strain ATCC 10500 / CBS 375.48 / QM 6759 / NRRL 1006) (Penicillium stipitatum).